The sequence spans 430 residues: Toxin coregulated pilus biosynthesis protein B (430 aa).

Polar residues predominate over residues Asn351–Lys366. The disordered stretch occupies residues Asn351–Gly371.

Functionally, involved in TCP pilus biogenesis. This is Toxin coregulated pilus biosynthesis protein B (tcpB) from Vibrio cholerae serotype O1 (strain ATCC 39315 / El Tor Inaba N16961).